A 104-amino-acid chain; its full sequence is N(4)-acetylcytidine amidohydrolase (104 aa).

Residues Ile6–Gln94 form the ASCH domain. The active-site Proton acceptor is Lys21. Thr24 functions as the Nucleophile in the catalytic mechanism. Glu74 serves as the catalytic Proton donor.

Belongs to the N(4)-acetylcytidine amidohydrolase family.

The catalysed reaction is N(4)-acetylcytidine + H2O = cytidine + acetate + H(+). It catalyses the reaction N(4)-acetyl-2'-deoxycytidine + H2O = 2'-deoxycytidine + acetate + H(+). The enzyme catalyses N(4)-acetylcytosine + H2O = cytosine + acetate + H(+). Catalyzes the hydrolysis of N(4)-acetylcytidine (ac4C). This Salmonella agona (strain SL483) protein is N(4)-acetylcytidine amidohydrolase (yqfB).